The following is a 522-amino-acid chain: Putative malate dehydrogenase 1B (522 aa).

The tract at residues 495 to 522 is disordered; the sequence is EETEKSSSEDTPEAAAAAVSTGDETVPS.

Belongs to the LDH/MDH superfamily. MDH type 2 family.

The protein is Putative malate dehydrogenase 1B (MDH1B) of Branchiostoma floridae (Florida lancelet).